We begin with the raw amino-acid sequence, 620 residues long: Proline--tRNA ligase (620 aa).

This sequence belongs to the class-II aminoacyl-tRNA synthetase family. ProS type 1 subfamily. As to quaternary structure, homodimer.

It is found in the cytoplasm. It catalyses the reaction tRNA(Pro) + L-proline + ATP = L-prolyl-tRNA(Pro) + AMP + diphosphate. In terms of biological role, catalyzes the attachment of proline to tRNA(Pro) in a two-step reaction: proline is first activated by ATP to form Pro-AMP and then transferred to the acceptor end of tRNA(Pro). As ProRS can inadvertently accommodate and process non-cognate amino acids such as alanine and cysteine, to avoid such errors it has two additional distinct editing activities against alanine. One activity is designated as 'pretransfer' editing and involves the tRNA(Pro)-independent hydrolysis of activated Ala-AMP. The other activity is designated 'posttransfer' editing and involves deacylation of mischarged Ala-tRNA(Pro). The misacylated Cys-tRNA(Pro) is not edited by ProRS. The protein is Proline--tRNA ligase of Streptococcus suis (strain 98HAH33).